The chain runs to 72 residues: Metallothionein-like protein type 2 A (72 aa).

This sequence belongs to the metallothionein superfamily. Type 15 family. Leaves and roots.

In terms of biological role, metallothioneins have a high content of cysteine residues that bind various heavy metals. In Solanum lycopersicum (Tomato), this protein is Metallothionein-like protein type 2 A (MTA).